The primary structure comprises 337 residues: DNA-directed RNA polymerase subunit alpha (337 aa).

An alpha N-terminal domain (alpha-NTD) region spans residues 1–233 (MVREKVTVST…DLFIPFLHAQ (233 aa)). The tract at residues 267 to 337 (IALKYIFIDQ…FTVDLPKNKF (71 aa)) is alpha C-terminal domain (alpha-CTD).

This sequence belongs to the RNA polymerase alpha chain family. As to quaternary structure, in plastids the minimal PEP RNA polymerase catalytic core is composed of four subunits: alpha, beta, beta', and beta''. When a (nuclear-encoded) sigma factor is associated with the core the holoenzyme is formed, which can initiate transcription.

The protein localises to the plastid. It localises to the chloroplast. It catalyses the reaction RNA(n) + a ribonucleoside 5'-triphosphate = RNA(n+1) + diphosphate. Its function is as follows. DNA-dependent RNA polymerase catalyzes the transcription of DNA into RNA using the four ribonucleoside triphosphates as substrates. The polypeptide is DNA-directed RNA polymerase subunit alpha (Platanus occidentalis (Sycamore)).